The primary structure comprises 453 residues: Protein ECM18 (453 aa).

The AB hydrolase-1 domain maps to 130–435 (LLIHGYAASS…SGHNLFLDNP (306 aa)). The HXXXXD motif motif lies at 428–433 (HNLFLD).

The protein belongs to the peptidase S33 family. ABHD4/ABHD5 subfamily.

It localises to the mitochondrion. In terms of biological role, may be involved in cell wall organization and biogenesis. The sequence is that of Protein ECM18 (ECM18) from Saccharomyces cerevisiae (strain ATCC 204508 / S288c) (Baker's yeast).